Consider the following 226-residue polypeptide: Phosphoheptose isomerase (226 aa).

Positions 50–212 (IAGVFETGGK…ERMMGYGTEC (163 aa)) constitute an SIS domain. 65-67 (NGG) is a substrate binding site. His74 and Glu78 together coordinate Zn(2+). Residues Glu78, 109–110 (ND), 135–137 (STS), Ser140, and Gln188 each bind substrate. Zn(2+) contacts are provided by Gln188 and His196.

This sequence belongs to the SIS family. GmhA subfamily. Requires Zn(2+) as cofactor.

Its subcellular location is the cytoplasm. The enzyme catalyses 2 D-sedoheptulose 7-phosphate = D-glycero-alpha-D-manno-heptose 7-phosphate + D-glycero-beta-D-manno-heptose 7-phosphate. Its pathway is carbohydrate biosynthesis; D-glycero-D-manno-heptose 7-phosphate biosynthesis; D-glycero-alpha-D-manno-heptose 7-phosphate and D-glycero-beta-D-manno-heptose 7-phosphate from sedoheptulose 7-phosphate: step 1/1. Functionally, catalyzes the isomerization of sedoheptulose 7-phosphate in D-glycero-D-manno-heptose 7-phosphate. This chain is Phosphoheptose isomerase, found in Chlorobium phaeobacteroides (strain DSM 266 / SMG 266 / 2430).